Reading from the N-terminus, the 212-residue chain is Pyridoxine/pyridoxamine 5'-phosphate oxidase (212 aa).

Substrate is bound by residues 8 to 11 (RREY) and lysine 66. FMN contacts are provided by residues 61 to 66 (RIVLLK), 76 to 77 (FT), arginine 82, lysine 83, and glutamine 105. Substrate contacts are provided by tyrosine 123, arginine 127, and serine 131. FMN contacts are provided by residues 140–141 (QS) and tryptophan 185. A substrate-binding site is contributed by 191 to 193 (RLH). Arginine 195 contributes to the FMN binding site.

It belongs to the pyridoxamine 5'-phosphate oxidase family. Homodimer. It depends on FMN as a cofactor.

It carries out the reaction pyridoxamine 5'-phosphate + O2 + H2O = pyridoxal 5'-phosphate + H2O2 + NH4(+). The enzyme catalyses pyridoxine 5'-phosphate + O2 = pyridoxal 5'-phosphate + H2O2. It participates in cofactor metabolism; pyridoxal 5'-phosphate salvage; pyridoxal 5'-phosphate from pyridoxamine 5'-phosphate: step 1/1. It functions in the pathway cofactor metabolism; pyridoxal 5'-phosphate salvage; pyridoxal 5'-phosphate from pyridoxine 5'-phosphate: step 1/1. Its function is as follows. Catalyzes the oxidation of either pyridoxine 5'-phosphate (PNP) or pyridoxamine 5'-phosphate (PMP) into pyridoxal 5'-phosphate (PLP). The sequence is that of Pyridoxine/pyridoxamine 5'-phosphate oxidase from Shewanella sp. (strain W3-18-1).